Consider the following 149-residue polypeptide: D-aminoacyl-tRNA deacylase (149 aa).

Residues 137–138 (GP) carry the Gly-cisPro motif, important for rejection of L-amino acids motif.

It belongs to the DTD family. Homodimer.

The protein localises to the cytoplasm. It carries out the reaction glycyl-tRNA(Ala) + H2O = tRNA(Ala) + glycine + H(+). It catalyses the reaction a D-aminoacyl-tRNA + H2O = a tRNA + a D-alpha-amino acid + H(+). Functionally, an aminoacyl-tRNA editing enzyme that deacylates mischarged D-aminoacyl-tRNAs. Also deacylates mischarged glycyl-tRNA(Ala), protecting cells against glycine mischarging by AlaRS. Acts via tRNA-based rather than protein-based catalysis; rejects L-amino acids rather than detecting D-amino acids in the active site. By recycling D-aminoacyl-tRNA to D-amino acids and free tRNA molecules, this enzyme counteracts the toxicity associated with the formation of D-aminoacyl-tRNA entities in vivo and helps enforce protein L-homochirality. The sequence is that of D-aminoacyl-tRNA deacylase from Desulforudis audaxviator (strain MP104C).